Consider the following 245-residue polypeptide: Acetylglutamate kinase (245 aa).

Substrate-binding positions include 41–42 (GG), Arg-63, and Asn-156.

It belongs to the acetylglutamate kinase family. ArgB subfamily.

The protein localises to the cytoplasm. The catalysed reaction is N-acetyl-L-glutamate + ATP = N-acetyl-L-glutamyl 5-phosphate + ADP. The protein operates within amino-acid biosynthesis; L-arginine biosynthesis; N(2)-acetyl-L-ornithine from L-glutamate: step 2/4. In terms of biological role, catalyzes the ATP-dependent phosphorylation of N-acetyl-L-glutamate. This is Acetylglutamate kinase from Leuconostoc citreum (strain KM20).